A 601-amino-acid chain; its full sequence is Nuclear receptor subfamily 2 group C member 1 (601 aa).

The interval 1–179 (MATIEEIAHQ…RLQRCIAFGM (179 aa)) is required for interaction with KAT2B. A DNA-binding region (nuclear receptor) is located at residues 111–186 (FDLCVVCGDK…FGMKQDSVQC (76 aa)). 2 NR C4-type zinc fingers span residues 114–134 (CVVC…CEGC) and 150–169 (CRGS…CQYC). Residues serine 198 and serine 216 each carry the phosphoserine modification. Threonine 221 carries the phosphothreonine modification. Residue threonine 223 is modified to Phosphothreonine; by MAPK1. Residue lysine 251 forms a Glycyl lysine isopeptide (Lys-Gly) (interchain with G-Cter in SUMO); alternate linkage. Residue lysine 251 forms a Glycyl lysine isopeptide (Lys-Gly) (interchain with G-Cter in SUMO2); alternate linkage. Residues 349–591 (GSVHLITGDS…SVIPHILKME (243 aa)) form the NR LBD domain. Serine 582 bears the Phosphoserine; by PKC mark. Residues 585 to 601 (PHILKMEPGQYSKTSSL) form a required for interaction with NRIP1 region. Residue lysine 589 forms a Glycyl lysine isopeptide (Lys-Gly) (interchain with G-Cter in SUMO2) linkage.

Belongs to the nuclear hormone receptor family. NR2 subfamily. As to quaternary structure, homodimer. Heterodimer; with NR2C2 which is required for chromatin remodeling and for binding to promoter regions such as globin DR1 repeats. Interacts with ESR1; the interaction prevents homodimerization of ESR1 and suppresses its transcriptional activity and cell growth. Interacts with NRIP1 (via its LXXLL motifs); the interaction provides corepressor activity. Interacts with HDAC3 (via the DNA-binding domain); the interaction recruits phosphorylated NR2C1 to PML bodies for sumoylation. Interacts with HDAC4 (via the DNA-binding domain). Interacts with PIAS1; the interaction is required for sumoylation of NR2C1. Interacts with UBE2I; the interaction is required for sumoylation of NR2C1. Interacts with KAT2B; the interaction acts as a corepressor of gene expression. Sumoylation requires both PIAS1 and UBE2I. Sumoylation appears to dissociate NR2C1 from the PML nuclear bodies. Enhances the interaction with NRIP1 but inhibits interaction with KAT2B. In proliferating cells, stimulation by all-trans retinoic acid, activation of MAPK1-mediated phosphorylation and recruitment to PML bodies with subsequent sumoylation, suppresses OCT4 expression. Post-translationally, phosphorylated on several serine and threonine residues. Phosphorylation on Thr-223, stimulated by all-trans retinoic acid (atRA) mediates PML location and sumoylation in proliferating cells which then modulates its association with effector molecules, KAT2B and NRIP1. Phosphorylation on Ser-582 by PKC is important for protein stability and function as activator of RARB.

The protein localises to the nucleus. It is found in the PML body. Functionally, orphan nuclear receptor. Binds the IR7 element in the promoter of its own gene in an autoregulatory negative feedback mechanism. Primarily repressor of a broad range of genes including ESR1 and RARB. Together with NR2C2, forms the core of the DRED (direct repeat erythroid-definitive) complex that represses embryonic and fetal globin transcription. Binds to hormone response elements (HREs) consisting of two 5'-AGGTCA-3' half site direct repeat consensus sequences. Also activator of OCT4 gene expression. Plays a fundamental role in early embryogenesis and regulates embryonic stem cell proliferation and differentiation. Mediator of retinoic acid-regulated preadipocyte proliferation. The chain is Nuclear receptor subfamily 2 group C member 1 (NR2C1) from Pongo abelii (Sumatran orangutan).